The following is a 149-amino-acid chain: MSKSLSFKTYSAKPGEVERSWYVIDADGQVLGRMAAEIARVLRGKHKPQFTPHIDTGDFIVVTNAAKIGLSGKKTEQKSYFSHSNYPGGVKFDHVKDLLKKKPEKIIEHAVWGMLPHNNLGRQLFKKLKVYAGPEHPHASQNPVEMKVN.

It belongs to the universal ribosomal protein uL13 family. Part of the 50S ribosomal subunit.

Functionally, this protein is one of the early assembly proteins of the 50S ribosomal subunit, although it is not seen to bind rRNA by itself. It is important during the early stages of 50S assembly. This is Large ribosomal subunit protein uL13 from Chlorobium phaeobacteroides (strain DSM 266 / SMG 266 / 2430).